An 800-amino-acid polypeptide reads, in one-letter code: Cation/H(+) antiporter 19 (800 aa).

12 consecutive transmembrane segments (helical) span residues 30-50 (FALP…RLLA), 60-77 (RVIA…SALG), 92-112 (LTVL…LVGL), 127-147 (LLIA…TSFV), 158-178 (QLPF…PVLA), 196-216 (MSAA…AIAL), 224-244 (LVSV…VVAI), 278-298 (FVTD…GIVA), 315-335 (LVSG…TDVT), 343-363 (WGLL…GTVG), 375-395 (AVTL…VLNI), and 408-428 (AILV…VMLI). The tract at residues 776 to 800 (ADTRPLVEEDAEYDQSSRDISDLTA) is disordered. Residues 790–800 (QSSRDISDLTA) show a composition bias toward basic and acidic residues.

It belongs to the monovalent cation:proton antiporter 2 (CPA2) transporter (TC 2.A.37) family. CHX (TC 2.A.37.4) subfamily. As to expression, expressed in the whole plant but preferentially in pollen.

The protein resides in the membrane. May operate as a cation/H(+) antiporter. The polypeptide is Cation/H(+) antiporter 19 (CHX19) (Arabidopsis thaliana (Mouse-ear cress)).